Here is a 438-residue protein sequence, read N- to C-terminus: Putative metabolite transport protein HI_0281 (438 aa).

Residues methionine 1–methionine 17 are Cytoplasmic-facing. Residues valine 18–phenylalanine 38 traverse the membrane as a helical segment. At asparagine 39–aspartate 52 the chain is on the periplasmic side. The chain crosses the membrane as a helical span at residues leucine 53 to phenylalanine 73. The Cytoplasmic segment spans residues glycine 74–threonine 85. Residues leucine 86–tyrosine 106 form a helical membrane-spanning segment. Residues alanine 107 to isoleucine 115 are Periplasmic-facing. The chain crosses the membrane as a helical span at residues leucine 116–alanine 136. Residues leucine 137–glutamine 156 are Cytoplasmic-facing. A helical membrane pass occupies residues leucine 157 to leucine 177. At glycine 178–alanine 181 the chain is on the periplasmic side. A helical membrane pass occupies residues leucine 182 to leucine 202. The Cytoplasmic portion of the chain corresponds to tyrosine 203 to methionine 239. Residues valine 240–alanine 260 traverse the membrane as a helical segment. Residues glutamine 261–phenylalanine 286 lie on the Periplasmic side of the membrane. Residues threonine 287–tyrosine 307 traverse the membrane as a helical segment. The Cytoplasmic portion of the chain corresponds to alanine 308–arginine 314. A helical transmembrane segment spans residues lysine 315 to glutamate 336. The Periplasmic segment spans residues asparagine 337–serine 342. The helical transmembrane segment at valine 343–alanine 363 threads the bilayer. Topologically, residues leucine 364 to glycine 377 are cytoplasmic. A helical membrane pass occupies residues alanine 378–leucine 398. The Periplasmic segment spans residues lysine 399–glycine 405. A helical membrane pass occupies residues valine 406–alanine 426. Topologically, residues serine 427–isoleucine 438 are cytoplasmic.

This sequence belongs to the major facilitator superfamily. Sugar transporter (TC 2.A.1.1) family.

The protein resides in the cell inner membrane. The protein is Putative metabolite transport protein HI_0281 of Haemophilus influenzae (strain ATCC 51907 / DSM 11121 / KW20 / Rd).